The primary structure comprises 185 residues: Ribosome-recycling factor (185 aa).

This sequence belongs to the RRF family.

The protein localises to the cytoplasm. Functionally, responsible for the release of ribosomes from messenger RNA at the termination of protein biosynthesis. May increase the efficiency of translation by recycling ribosomes from one round of translation to another. The chain is Ribosome-recycling factor from Thermosipho melanesiensis (strain DSM 12029 / CIP 104789 / BI429).